The primary structure comprises 301 residues: Cilia- and flagella-associated protein 161 (301 aa).

Positions 269–301 are disordered; that stretch reads GNPRDASSSMLDLPKPPTEDTRAMEQAMGLDTQ.

Microtubule inner protein component of sperm flagellar doublet microtubules. As to expression, expressed in airway epithelial cells.

The protein localises to the cytoplasm. The protein resides in the cytoskeleton. It localises to the cilium axoneme. Its subcellular location is the flagellum axoneme. Its function is as follows. Microtubule inner protein (MIP) part of the dynein-decorated doublet microtubules (DMTs) in cilia axoneme, which is required for motile cilia beating. In Homo sapiens (Human), this protein is Cilia- and flagella-associated protein 161.